Consider the following 286-residue polypeptide: UDP-3-O-acyl-N-acetylglucosamine deacetylase (286 aa).

3 residues coordinate Zn(2+): His-79, His-237, and Asp-241. His-264 serves as the catalytic Proton donor.

It belongs to the LpxC family. Zn(2+) is required as a cofactor.

It catalyses the reaction a UDP-3-O-[(3R)-3-hydroxyacyl]-N-acetyl-alpha-D-glucosamine + H2O = a UDP-3-O-[(3R)-3-hydroxyacyl]-alpha-D-glucosamine + acetate. Its pathway is glycolipid biosynthesis; lipid IV(A) biosynthesis; lipid IV(A) from (3R)-3-hydroxytetradecanoyl-[acyl-carrier-protein] and UDP-N-acetyl-alpha-D-glucosamine: step 2/6. In terms of biological role, catalyzes the hydrolysis of UDP-3-O-myristoyl-N-acetylglucosamine to form UDP-3-O-myristoylglucosamine and acetate, the committed step in lipid A biosynthesis. In Chlamydia muridarum (strain MoPn / Nigg), this protein is UDP-3-O-acyl-N-acetylglucosamine deacetylase.